Reading from the N-terminus, the 240-residue chain is UDP-2,3-diacylglucosamine hydrolase (240 aa).

Positions 9, 11, 43, 81, and 116 each coordinate Mn(2+). Position 81–82 (81–82 (NR)) interacts with substrate. Residues D124, S162, K166, K169, and H197 each contribute to the substrate site. H197 and H199 together coordinate Mn(2+).

Belongs to the LpxH family. Mn(2+) is required as a cofactor.

It localises to the cell inner membrane. The catalysed reaction is UDP-2-N,3-O-bis[(3R)-3-hydroxytetradecanoyl]-alpha-D-glucosamine + H2O = 2-N,3-O-bis[(3R)-3-hydroxytetradecanoyl]-alpha-D-glucosaminyl 1-phosphate + UMP + 2 H(+). Its pathway is glycolipid biosynthesis; lipid IV(A) biosynthesis; lipid IV(A) from (3R)-3-hydroxytetradecanoyl-[acyl-carrier-protein] and UDP-N-acetyl-alpha-D-glucosamine: step 4/6. Its function is as follows. Hydrolyzes the pyrophosphate bond of UDP-2,3-diacylglucosamine to yield 2,3-diacylglucosamine 1-phosphate (lipid X) and UMP by catalyzing the attack of water at the alpha-P atom. Involved in the biosynthesis of lipid A, a phosphorylated glycolipid that anchors the lipopolysaccharide to the outer membrane of the cell. The polypeptide is UDP-2,3-diacylglucosamine hydrolase (Neisseria meningitidis serogroup C (strain 053442)).